A 168-amino-acid polypeptide reads, in one-letter code: G/U mismatch-specific DNA glycosylase (168 aa).

This sequence belongs to the uracil-DNA glycosylase (UDG) superfamily. TDG/mug family. In terms of assembly, binds DNA as a monomer.

The protein localises to the cytoplasm. It carries out the reaction Specifically hydrolyzes mismatched double-stranded DNA and polynucleotides, releasing free uracil.. Its function is as follows. Excises ethenocytosine and uracil, which can arise by alkylation or deamination of cytosine, respectively, from the corresponding mispairs with guanine in ds-DNA. It is capable of hydrolyzing the carbon-nitrogen bond between the sugar-phosphate backbone of the DNA and the mispaired base. The complementary strand guanine functions in substrate recognition. Required for DNA damage lesion repair in stationary-phase cells. The chain is G/U mismatch-specific DNA glycosylase from Salmonella agona (strain SL483).